Consider the following 634-residue polypeptide: DNA-directed RNA polymerase subunit gamma (634 aa).

Residues Cys-74, Cys-76, Cys-89, and Cys-92 each coordinate Zn(2+). Residues Asp-471, Asp-473, and Asp-475 each contribute to the Mg(2+) site.

The protein belongs to the RNA polymerase beta' chain family. RpoC1 subfamily. In terms of assembly, in cyanobacteria the RNAP catalytic core is composed of 2 alpha, 1 beta, 1 beta', 1 gamma and 1 omega subunit. When a sigma factor is associated with the core the holoenzyme is formed, which can initiate transcription. Mg(2+) serves as cofactor. The cofactor is Zn(2+).

The catalysed reaction is RNA(n) + a ribonucleoside 5'-triphosphate = RNA(n+1) + diphosphate. Functionally, DNA-dependent RNA polymerase catalyzes the transcription of DNA into RNA using the four ribonucleoside triphosphates as substrates. This Prochlorococcus marinus subsp. pastoris (strain CCMP1986 / NIES-2087 / MED4) protein is DNA-directed RNA polymerase subunit gamma.